Here is an 859-residue protein sequence, read N- to C-terminus: Leucine--tRNA ligase (859 aa).

A 'HIGH' region motif is present at residues 42–52; it reads PYPSGRLHMGH. The short motif at 618 to 622 is the 'KMSKS' region element; sequence KMSKS. Position 621 (Lys621) interacts with ATP.

It belongs to the class-I aminoacyl-tRNA synthetase family.

Its subcellular location is the cytoplasm. The enzyme catalyses tRNA(Leu) + L-leucine + ATP = L-leucyl-tRNA(Leu) + AMP + diphosphate. The polypeptide is Leucine--tRNA ligase (Shewanella pealeana (strain ATCC 700345 / ANG-SQ1)).